The primary structure comprises 165 residues: uncharacterized protein (165 aa).

The span at 22–34 (QQANQENMSSRTD) shows a compositional bias: polar residues. The interval 22 to 45 (QQANQENMSSRTDSPIPPFGESEQ) is disordered.

This is an uncharacterized protein from Homo sapiens (Human).